The sequence spans 148 residues: Large-conductance mechanosensitive channel (148 aa).

3 consecutive transmembrane segments (helical) span residues 21-41 (IDLA…DSVV), 45-65 (IMPL…KFLV), and 92-112 (GNFL…FIIV).

This sequence belongs to the MscL family. As to quaternary structure, homopentamer.

It localises to the cell inner membrane. Channel that opens in response to stretch forces in the membrane lipid bilayer. May participate in the regulation of osmotic pressure changes within the cell. The polypeptide is Large-conductance mechanosensitive channel (Bordetella petrii (strain ATCC BAA-461 / DSM 12804 / CCUG 43448)).